The primary structure comprises 171 residues: Co-chaperone protein HscB homolog (171 aa).

Positions 2–74 (NHFELFGLPS…ISRAEYILAE (73 aa)) constitute a J domain.

It belongs to the HscB family. Interacts with HscA and stimulates its ATPase activity.

In terms of biological role, co-chaperone involved in the maturation of iron-sulfur cluster-containing proteins. Seems to help targeting proteins to be folded toward HscA. This is Co-chaperone protein HscB homolog from Vibrio parahaemolyticus serotype O3:K6 (strain RIMD 2210633).